A 418-amino-acid polypeptide reads, in one-letter code: UDP-N-acetylglucosamine 1-carboxyvinyltransferase (418 aa).

22–23 contributes to the phosphoenolpyruvate binding site; it reads KN. Arg-93 contacts UDP-N-acetyl-alpha-D-glucosamine. Residue Cys-117 is the Proton donor of the active site. 2-(S-cysteinyl)pyruvic acid O-phosphothioketal is present on Cys-117. Residues Asp-306 and Ile-328 each contribute to the UDP-N-acetyl-alpha-D-glucosamine site.

This sequence belongs to the EPSP synthase family. MurA subfamily.

It is found in the cytoplasm. The catalysed reaction is phosphoenolpyruvate + UDP-N-acetyl-alpha-D-glucosamine = UDP-N-acetyl-3-O-(1-carboxyvinyl)-alpha-D-glucosamine + phosphate. Its pathway is cell wall biogenesis; peptidoglycan biosynthesis. Functionally, cell wall formation. Adds enolpyruvyl to UDP-N-acetylglucosamine. This chain is UDP-N-acetylglucosamine 1-carboxyvinyltransferase, found in Hydrogenovibrio crunogenus (strain DSM 25203 / XCL-2) (Thiomicrospira crunogena).